A 397-amino-acid polypeptide reads, in one-letter code: Phosphoglycerate kinase (397 aa).

Substrate-binding positions include Asp-21–Asn-23, Arg-37, His-60–Arg-63, Arg-120, and Arg-153. ATP-binding positions include Lys-206, Gly-296, Glu-327, and Gly-353–Ser-356.

The protein belongs to the phosphoglycerate kinase family. Monomer.

The protein localises to the cytoplasm. It carries out the reaction (2R)-3-phosphoglycerate + ATP = (2R)-3-phospho-glyceroyl phosphate + ADP. Its pathway is carbohydrate degradation; glycolysis; pyruvate from D-glyceraldehyde 3-phosphate: step 2/5. The polypeptide is Phosphoglycerate kinase (Rhodopirellula baltica (strain DSM 10527 / NCIMB 13988 / SH1)).